Reading from the N-terminus, the 450-residue chain is MSLLQFSGLFVVWLLCTLFIATLTWFEFRRVRFNFNVFFSLLFLLTFFFGFPLTSVLVFRFDVGVAPPEILLQALLSAGCFYAVYYVTYKTRLRKRVADVPRRPLFTMNRVETNLTWVILMGIALVSVGIFFMHNGFLLFRLNSYSQIFSSEVSGVALKRFFYFFIPAMLVVYFLRQDSKAWLFFLVSTVAFGLLTYMIVGGTRANIIIAFAIFLFIGIIRGWISLWMLAAAGVLGIVGMFWLALKRYGMNVSGDEAFYTFLYLTRDTFSPWENLALLLQNYDNIDFQGLAPIVRDFYVFIPSWLWPGRPSMVLNSANYFTWEVLNNHSGLAISPTLIGSLVVMGGALFIPLGAIVVGLIIKWFDWLYELGNREPNRYKAAILHSFCFGAIFNMIVLAREGLDSFVSRVVFFIVVFGACLMIAKLLYWLFESAGLIHKRTKSSLRTQVEG.

Transmembrane regions (helical) follow at residues 6-26 (FSGL…LTWF), 37-57 (VFFS…TSVL), 63-83 (VGVA…CFYA), 118-138 (VILM…NGFL), 155-175 (GVAL…VYFL), 181-201 (AWLF…MIVG), 207-227 (IIIA…ISLW), 228-248 (MLAA…LKRY), 341-361 (LVVM…GLII), 378-398 (YKAA…IVLA), and 410-430 (VFFI…YWLF).

The protein belongs to the WzyE family. As to quaternary structure, probably part of a complex composed of WzxE, WzyE and WzzE.

Its subcellular location is the cell inner membrane. The protein operates within bacterial outer membrane biogenesis; enterobacterial common antigen biosynthesis. Probably involved in the polymerization of enterobacterial common antigen (ECA) trisaccharide repeat units. The sequence is that of Probable ECA polymerase from Shigella sonnei (strain Ss046).